Reading from the N-terminus, the 264-residue chain is MKPTTISLLQKYKQEKKRFATITAYDYSFAKLFADEGLNVMLVGDSLGMTVQGHDSTLPVTVADIAYHTAAVRRGAPNCLLLADLPFMAYATPEQAFENAATVMRAGANMVKIEGGEWLVETVQMLTERAVPVCGHLGLTPQSVNIFGGYKVQGRGDEAGDQLLSDALALEAAGAQLLVLECVPVELAKRITEALAIPVIGIGAGNVTDGQILVMHDAFGITGGHIPKFAKNFLAETGDIRAAVRQYMAEVESGVYPGEEHSFH.

Mg(2+) contacts are provided by Asp-45 and Asp-84. 3-methyl-2-oxobutanoate-binding positions include Asp-45–Ser-46, Asp-84, and Lys-112. A Mg(2+)-binding site is contributed by Glu-114. Glu-181 acts as the Proton acceptor in catalysis.

This sequence belongs to the PanB family. In terms of assembly, homodecamer; pentamer of dimers. Mg(2+) is required as a cofactor.

The protein resides in the cytoplasm. The catalysed reaction is 3-methyl-2-oxobutanoate + (6R)-5,10-methylene-5,6,7,8-tetrahydrofolate + H2O = 2-dehydropantoate + (6S)-5,6,7,8-tetrahydrofolate. The protein operates within cofactor biosynthesis; (R)-pantothenate biosynthesis; (R)-pantoate from 3-methyl-2-oxobutanoate: step 1/2. Its function is as follows. Catalyzes the reversible reaction in which hydroxymethyl group from 5,10-methylenetetrahydrofolate is transferred onto alpha-ketoisovalerate to form ketopantoate. In Escherichia coli (strain K12 / MC4100 / BW2952), this protein is 3-methyl-2-oxobutanoate hydroxymethyltransferase.